Reading from the N-terminus, the 1521-residue chain is Suppressor of Ty 6 homolog (1521 aa).

The interval 1 to 238 (MDFIDNQAEE…EEIIEDDGEG (238 aa)) is disordered. The span at 26 to 41 (KKMKMAKEKSKRKKKM) shows a compositional bias: basic residues. The Nuclear localization signal signature appears at 26–42 (KKMKMAKEKSKRKKKMV). Composition is skewed to acidic residues over residues 45–56 (SDEDEDDDDDEE) and 67–76 (ADDDDEEEDA). Over residues 77–89 (KSEKSEKSRHSGE) the composition is skewed to basic and acidic residues. Acidic residues predominate over residues 90–99 (DELDDEDLDL). Residues 126-157 (PIRRPNHEDDDLLSERGSDDGDRRKDRGRGDR) are compositionally biased toward basic and acidic residues. Acidic residues-rich tracts occupy residues 166-176 (RSEDDFIEDDG), 191-200 (NLPEGAEDDA), and 209-238 (FNLD…DGEG). One can recognise an S1 motif domain in the interval 1183–1252 (LGDSRQGGCP…ERFSLFLSCK (70 aa)). One can recognise an SH2 domain in the interval 1300-1389 (HPNFHNVSYE…IARFVQPMIQ (90 aa)).

The protein belongs to the SPT6 family. Interacts with glp-1 and lin-12. In terms of tissue distribution, abundant in embryos, and less abundant in larvae.

It is found in the nucleus. Histone H3-H4 chaperone that plays a role in maintenance of chromatin structure during RNA polymerase II transcription elongation. Required for several aspects of morphogenesis of C.elegans, including regulation of division in the germline and gut and specification of ventral-uterine precursor cell fate. This chain is Suppressor of Ty 6 homolog (emb-5), found in Caenorhabditis elegans.